The following is a 573-amino-acid chain: LysM domain-containing protein ARB_01155/01156 (573 aa).

A signal peptide spans 1-18; sequence MIPRNLISGLFLLPFVVA. Residues Asn46, Asn71, and Asn283 are each glycosylated (N-linked (GlcNAc...) asparagine). A LysM domain is found at 373–419; the sequence is RYYEVVAGDQCNTIALHFGITVDAFLSLNTQIDERCSNLWIAYAYCV. The segment at 375 to 405 is lysM domain; sequence YEVVAGDQCNTIALHFGITVDAFLSLNTQID.

Its subcellular location is the secreted. Its function is as follows. Might have a role in sequestration of chitin oligosaccharides (breakdown products of fungal cell walls that are released during invasion and act as triggers of host immunity) to dampen host defense. The protein is LysM domain-containing protein ARB_01155/01156 of Arthroderma benhamiae (strain ATCC MYA-4681 / CBS 112371) (Trichophyton mentagrophytes).